The chain runs to 550 residues: Arginine--tRNA ligase (550 aa).

Residues 130 to 140 (ANPTGPIHIGG) carry the 'HIGH' region motif.

It belongs to the class-I aminoacyl-tRNA synthetase family. As to quaternary structure, monomer.

It is found in the cytoplasm. The enzyme catalyses tRNA(Arg) + L-arginine + ATP = L-arginyl-tRNA(Arg) + AMP + diphosphate. This Mycolicibacterium gilvum (strain PYR-GCK) (Mycobacterium gilvum (strain PYR-GCK)) protein is Arginine--tRNA ligase.